A 202-amino-acid polypeptide reads, in one-letter code: Dephospho-CoA kinase (202 aa).

The DPCK domain maps to 6–202 (KVSITGDLSS…EYFYALKGAL (197 aa)). 14 to 19 (SSGKTE) provides a ligand contact to ATP.

This sequence belongs to the CoaE family.

The protein localises to the cytoplasm. The enzyme catalyses 3'-dephospho-CoA + ATP = ADP + CoA + H(+). Its pathway is cofactor biosynthesis; coenzyme A biosynthesis; CoA from (R)-pantothenate: step 5/5. Functionally, catalyzes the phosphorylation of the 3'-hydroxyl group of dephosphocoenzyme A to form coenzyme A. The protein is Dephospho-CoA kinase of Chlamydia abortus (strain DSM 27085 / S26/3) (Chlamydophila abortus).